Consider the following 240-residue polypeptide: 2,3,4,5-tetrahydropyridine-2,6-dicarboxylate N-acetyltransferase (240 aa).

This sequence belongs to the transferase hexapeptide repeat family. DapH subfamily.

It catalyses the reaction (S)-2,3,4,5-tetrahydrodipicolinate + acetyl-CoA + H2O = L-2-acetamido-6-oxoheptanedioate + CoA. It participates in amino-acid biosynthesis; L-lysine biosynthesis via DAP pathway; LL-2,6-diaminopimelate from (S)-tetrahydrodipicolinate (acetylase route): step 1/3. Its function is as follows. Catalyzes the transfer of an acetyl group from acetyl-CoA to tetrahydrodipicolinate. This is 2,3,4,5-tetrahydropyridine-2,6-dicarboxylate N-acetyltransferase from Staphylococcus epidermidis (strain ATCC 12228 / FDA PCI 1200).